The primary structure comprises 379 residues: Chaperone protein DnaJ (379 aa).

The region spanning 7 to 72 (CYYETLEVER…DKRAAYDRYG (66 aa)) is the J domain. The CR-type zinc finger occupies 135-213 (GKTAQIEIPV…CTGSGRVTKE (79 aa)). Positions 148, 151, 165, 168, 187, 190, 201, and 204 each coordinate Zn(2+). 4 CXXCXGXG motif repeats span residues 148–155 (CEACSGTG), 165–172 (CSTCGGAG), 187–194 (CPSCQGRG), and 201–208 (CPSCTGSG).

The protein belongs to the DnaJ family. As to quaternary structure, homodimer. The cofactor is Zn(2+).

The protein localises to the cytoplasm. Participates actively in the response to hyperosmotic and heat shock by preventing the aggregation of stress-denatured proteins and by disaggregating proteins, also in an autonomous, DnaK-independent fashion. Unfolded proteins bind initially to DnaJ; upon interaction with the DnaJ-bound protein, DnaK hydrolyzes its bound ATP, resulting in the formation of a stable complex. GrpE releases ADP from DnaK; ATP binding to DnaK triggers the release of the substrate protein, thus completing the reaction cycle. Several rounds of ATP-dependent interactions between DnaJ, DnaK and GrpE are required for fully efficient folding. Also involved, together with DnaK and GrpE, in the DNA replication of plasmids through activation of initiation proteins. This Rhodopseudomonas palustris (strain ATCC BAA-98 / CGA009) protein is Chaperone protein DnaJ.